The primary structure comprises 463 residues: Perilipin-5 (463 aa).

The tract at residues 1–108 (MSEEEAAQIP…KLEEKLPFLQ (108 aa)) is interaction with LIPE. An essential for lipid droplet targeting region spans residues 1 to 173 (MSEEEAAQIP…HFLPMTEEEL (173 aa)). Phosphoserine is present on residues Ser2, Ser148, and Ser322. The tract at residues 185–463 (VGSVEDQRRQ…KHTLMPELDF (279 aa)) is interaction with PNPLA2 and ABHD5. The segment at 444-463 (QEPETPSCPVKHTLMPELDF) is recruits mitochondria at the lipid droplet surface.

It belongs to the perilipin family. As to quaternary structure, homooligomer. Interacts with PNPLA2; prevents interaction of PNPLA2 with ABHD5. Interacts with ABHD5; targets ABHD5 to lipid droplets and promotes interaction of ABHD5 with PNPLA2. Interacts with LIPE. In terms of processing, phosphorylated by PKA. Phosphorylated on serine in skeletal muscle at rest or upon lipolytic stimulation. In terms of tissue distribution, expressed in skeletal muscle, liver, heart and kidney.

It localises to the lipid droplet. The protein resides in the cytoplasm. The protein localises to the mitochondrion. Functionally, lipid droplet-associated protein that maintains the balance between lipogenesis and lipolysis and also regulates fatty acid oxidation in oxidative tissues. Recruits mitochondria to the surface of lipid droplets and is involved in lipid droplet homeostasis by regulating both the storage of fatty acids in the form of triglycerides and the release of fatty acids for mitochondrial fatty acid oxidation. In lipid droplet triacylglycerol hydrolysis, plays a role as a scaffolding protein for three major key lipolytic players: ABHD5, PNPLA2 and LIPE. Reduces the triacylglycerol hydrolase activity of PNPLA2 by recruiting and sequestering PNPLA2 to lipid droplets. Phosphorylation by PKA enables lipolysis probably by promoting release of ABHD5 from the perilipin scaffold and by facilitating interaction of ABHD5 with PNPLA2. Also increases lipolysis through interaction with LIPE and upon PKA-mediated phosphorylation of LIPE. The protein is Perilipin-5 (PLIN5) of Homo sapiens (Human).